The primary structure comprises 198 residues: Probable opine utilization operon repressor (198 aa).

It participates in opine metabolism; mannopine biosynthesis [regulation]. Functionally, possible repressor for genes for mannityl-opine utilization and / or plasmid conjugative transfer. The protein is Probable opine utilization operon repressor (opnR) of Rhizobium rhizogenes (Agrobacterium rhizogenes).